The following is a 500-amino-acid chain: L-arabinose isomerase (500 aa).

Glu-306, Glu-333, His-350, and His-450 together coordinate Mn(2+).

Belongs to the arabinose isomerase family. As to quaternary structure, homohexamer. Mn(2+) is required as a cofactor.

The catalysed reaction is beta-L-arabinopyranose = L-ribulose. It participates in carbohydrate degradation; L-arabinose degradation via L-ribulose; D-xylulose 5-phosphate from L-arabinose (bacterial route): step 1/3. Its function is as follows. Catalyzes the conversion of L-arabinose to L-ribulose. The sequence is that of L-arabinose isomerase from Shigella flexneri.